The primary structure comprises 136 residues: Nucleoside diphosphate kinase (136 aa).

Residues lysine 10, phenylalanine 58, arginine 86, threonine 92, arginine 104, and asparagine 114 each coordinate ATP. Catalysis depends on histidine 117, which acts as the Pros-phosphohistidine intermediate.

This sequence belongs to the NDK family. In terms of assembly, homohexamer. Mg(2+) serves as cofactor.

Its subcellular location is the cytoplasm. It catalyses the reaction a 2'-deoxyribonucleoside 5'-diphosphate + ATP = a 2'-deoxyribonucleoside 5'-triphosphate + ADP. The enzyme catalyses a ribonucleoside 5'-diphosphate + ATP = a ribonucleoside 5'-triphosphate + ADP. In terms of biological role, major role in the synthesis of nucleoside triphosphates other than ATP. The ATP gamma phosphate is transferred to the NDP beta phosphate via a ping-pong mechanism, using a phosphorylated active-site intermediate. This Mycobacterium bovis (strain ATCC BAA-935 / AF2122/97) protein is Nucleoside diphosphate kinase.